The sequence spans 441 residues: GTPase Der (441 aa).

2 consecutive EngA-type G domains span residues 2–164 (QKVA…PADE) and 173–343 (IRIS…EKWQ). GTP-binding positions include 8 to 15 (GRPNVGKS), 55 to 59 (DTGGL), 116 to 119 (NKID), 179 to 186 (GRPNVGKS), 226 to 230 (DTAGI), and 288 to 291 (NKWD). One can recognise a KH-like domain in the interval 344 to 428 (SRIPTAELNR…PVRLKWKEKG (85 aa)).

Belongs to the TRAFAC class TrmE-Era-EngA-EngB-Septin-like GTPase superfamily. EngA (Der) GTPase family. Associates with the 50S ribosomal subunit.

In terms of biological role, GTPase that plays an essential role in the late steps of ribosome biogenesis. The chain is GTPase Der from Deinococcus geothermalis (strain DSM 11300 / CIP 105573 / AG-3a).